The following is a 481-amino-acid chain: Endoplasmic reticulum lectin 1 (481 aa).

The first 27 residues, 1 to 27 (MRRSDRLRCAGASLLVVLCGVFRSSFG), serve as a signal peptide directing secretion. 2 consecutive MRH domains span residues 108–245 (SSCS…LCNH) and 340–467 (SYCF…ICKI). Intrachain disulfides connect cysteine 110–cysteine 123, cysteine 198–cysteine 231, cysteine 214–cysteine 243, cysteine 342–cysteine 355, cysteine 419–cysteine 453, and cysteine 434–cysteine 465.

It is found in the endoplasmic reticulum lumen. Functionally, probable lectin that binds selectively to improperly folded lumenal proteins. May function in endoplasmic reticulum quality control and endoplasmic reticulum-associated degradation (ERAD) of both non-glycosylated proteins and glycoproteins. This Xenopus tropicalis (Western clawed frog) protein is Endoplasmic reticulum lectin 1 (erlec1).